The chain runs to 293 residues: Putative immediate early glycoprotein (293 aa).

Positions 1–21 (MKKLTMESLSVYIFVMGVCFT) are cleaved as a signal peptide. Residues Asn23, Asn55, Asn83, Asn120, Asn150, Asn156, Asn168, Asn212, and Asn249 are each glycosylated (N-linked (GlcNAc...) asparagine; by host). Residues 262–282 (LFFLAGGAFTMLLLLCCLSMI) form a helical membrane-spanning segment.

This sequence belongs to the herpesviridae immediate early glycoprotein family.

The protein localises to the membrane. The protein is Putative immediate early glycoprotein (U18) of Human herpesvirus 6A (strain Uganda-1102) (HHV-6 variant A).